Consider the following 285-residue polypeptide: Bifunctional protein FolD (285 aa).

NADP(+) contacts are provided by residues 164 to 166, serine 189, and isoleucine 230; that span reads GRS.

The protein belongs to the tetrahydrofolate dehydrogenase/cyclohydrolase family. As to quaternary structure, homodimer.

The enzyme catalyses (6R)-5,10-methylene-5,6,7,8-tetrahydrofolate + NADP(+) = (6R)-5,10-methenyltetrahydrofolate + NADPH. It carries out the reaction (6R)-5,10-methenyltetrahydrofolate + H2O = (6R)-10-formyltetrahydrofolate + H(+). It functions in the pathway one-carbon metabolism; tetrahydrofolate interconversion. Its function is as follows. Catalyzes the oxidation of 5,10-methylenetetrahydrofolate to 5,10-methenyltetrahydrofolate and then the hydrolysis of 5,10-methenyltetrahydrofolate to 10-formyltetrahydrofolate. This Oceanobacillus iheyensis (strain DSM 14371 / CIP 107618 / JCM 11309 / KCTC 3954 / HTE831) protein is Bifunctional protein FolD.